The following is a 161-amino-acid chain: Ethylene-responsive transcription factor ERF070 (161 aa).

The tract at residues 1–35 (MKRIIRISFTDAEATDSSSDEDTEERGGASQTRRR) is disordered. Positions 78-140 (KYRGVRQRPW…IGPHAPTNFG (63 aa)) form a DNA-binding region, AP2/ERF.

Belongs to the AP2/ERF transcription factor family. ERF subfamily.

Its subcellular location is the nucleus. Probably acts as a transcriptional activator. Binds to the GCC-box pathogenesis-related promoter element. May be involved in the regulation of gene expression by stress factors and by components of stress signal transduction pathways. This Arabidopsis thaliana (Mouse-ear cress) protein is Ethylene-responsive transcription factor ERF070 (ERF070).